We begin with the raw amino-acid sequence, 222 residues long: Methylthioribulose-1-phosphate dehydratase (222 aa).

Zn(2+) is bound by residues histidine 94 and histidine 96.

This sequence belongs to the aldolase class II family. MtnB subfamily. The cofactor is Zn(2+).

It carries out the reaction 5-(methylsulfanyl)-D-ribulose 1-phosphate = 5-methylsulfanyl-2,3-dioxopentyl phosphate + H2O. The protein operates within amino-acid biosynthesis; L-methionine biosynthesis via salvage pathway; L-methionine from S-methyl-5-thio-alpha-D-ribose 1-phosphate: step 2/6. Functionally, catalyzes the dehydration of methylthioribulose-1-phosphate (MTRu-1-P) into 2,3-diketo-5-methylthiopentyl-1-phosphate (DK-MTP-1-P). In Yersinia pseudotuberculosis serotype O:1b (strain IP 31758), this protein is Methylthioribulose-1-phosphate dehydratase.